The following is a 38-amino-acid chain: Large ribosomal subunit protein bL36 (38 aa).

The protein belongs to the bacterial ribosomal protein bL36 family.

This is Large ribosomal subunit protein bL36 from Synechocystis sp. (strain ATCC 27184 / PCC 6803 / Kazusa).